We begin with the raw amino-acid sequence, 373 residues long: MNTFGDNFRVTTWGESHGKALGAVIDGCPSNLPISEEDIQNELNRRRPGYSIFSTPRKEEDKLEILSGIFEGKTTGTPISGLVFNKGQKSKDYSKIKNTPRPGHADLNYFLKYGNYDYRGGGRSSGRTTIGNVIGGAVAKKLIEFTHNIKIIGYSTKIGKINGDFDYYKNPEFFESNSNIEKLFEKIENNPLRCPSKNSDEMKDYVLDAMDKQDSVGGIIEIIIKGIPQGVGNPVFNKLEGKLGSAFIGINAVKGFEIGRGFESSELYGSEMNDSYYMNKDSIKGKTNNTGGIIGGISTGSPVVLRVSIKPTPSISKIQESVNLISNENEKIEIGGRHDPIIVPRVIPVLESMAAITVADLMISSGYIDPCRI.

R46 provides a ligand contact to NADP(+). FMN is bound by residues 123–125, 251–252, G295, 310–314, and R337; these read RSS, NA, and KPTPS.

This sequence belongs to the chorismate synthase family. Requires FMNH2 as cofactor.

It carries out the reaction 5-O-(1-carboxyvinyl)-3-phosphoshikimate = chorismate + phosphate. The protein operates within metabolic intermediate biosynthesis; chorismate biosynthesis; chorismate from D-erythrose 4-phosphate and phosphoenolpyruvate: step 7/7. Catalyzes the anti-1,4-elimination of the C-3 phosphate and the C-6 proR hydrogen from 5-enolpyruvylshikimate-3-phosphate (EPSP) to yield chorismate, which is the branch point compound that serves as the starting substrate for the three terminal pathways of aromatic amino acid biosynthesis. This reaction introduces a second double bond into the aromatic ring system. The chain is Chorismate synthase from Methanococcus maripaludis (strain C5 / ATCC BAA-1333).